The following is a 620-amino-acid chain: Glutathione-regulated potassium-efflux system protein KefC (620 aa).

The next 12 helical transmembrane spans lie at 4–24 (HTLI…PIAV), 26–46 (LGLG…PWGL), 54–74 (SILH…GLEL), 90–110 (GALQ…LLGL), 114–134 (VAEL…MQAM), 149–169 (FAVL…IPLL), 178–198 (MGAF…VVLL), 218–238 (VFSA…EEVG), 270–290 (GLLL…GTLL), 294–314 (LRIV…LWLI), 327–347 (WFAV…GAAQ), and 359–379 (SLTL…VILN). An RCK N-terminal domain is found at 399–518 (QPRVIIAGFG…AGVEKPERET (120 aa)). Residues 597–620 (GWQGTEEGKHTGNMADEPETKPSS) are disordered.

It belongs to the monovalent cation:proton antiporter 2 (CPA2) transporter (TC 2.A.37) family. KefC subfamily. As to quaternary structure, homodimer. Interacts with the regulatory subunit KefF.

It localises to the cell inner membrane. Functionally, pore-forming subunit of a potassium efflux system that confers protection against electrophiles. Catalyzes K(+)/H(+) antiport. The sequence is that of Glutathione-regulated potassium-efflux system protein KefC from Escherichia coli O6:K15:H31 (strain 536 / UPEC).